A 716-amino-acid polypeptide reads, in one-letter code: MVSVKVNGNPQNRLVNNAKVNGNMAFRGNQNRNRNFGGGNNNYGGPMGANRMGGMNMSPWESQNPGGGQFGNNMRQGGGQMNAQAINLANNLLNNLFRNQNPPSLLDLPRGGGGMGNRNQRGGPMVSRGGGAGNRLNNRRGQGGGFQNRGATGSGPKPPPKQGGGGIRKQNAFDRAKKLLAKNANQNKKKEPTPGEKKIESPTKESPYASVPNDMFYCHLCKKHMWDANSFENHIKGRTHLMMREGIEESYRLKANMIRQEAKIAEQLKSIEFDRLKRMGKSKQRQLDYCTMCDLNFHGHISTHRKSEGHLQLKKFLHPKCIECNKEFATRIDYDTHLLSAEHLKKAAENNTKVGERKRQTLPISTEEEETRDLRLPQKRKKKPVKKEGEAADGEAKKEGAGDGEGAEGDEAEGEEAKEGEEAADETKEGDELNESQEEEEVALPVDPEDCILDFNDGDEIPSEVDTRLPKYNWQRAVGPGLISKLECYECSVCSKFFDTEVTAEIHSRTATHHRNFLKFINEKSSDTKIAQKRAAAALEENERKKRKVEEAEAPAAEGAAEETTEGAEGELYDPSEATGDDEDVEMVDDNAEGEGEGEGDEEAEAEVEEDGAGQDNGEEEMEAQEEEGQEGEQEPEPEPAPVQTPAPAEPAPPAKTPAKTPTKAAAPAAVASPAAAATSADASPSPAKKATPARAAAGAKATPQRQRARGRYNRY.

2 disordered regions span residues 103–168 and 182–208; these read PSLL…GGIR and KNAN…ESPY. Residues 188–203 show a composition bias toward basic and acidic residues; sequence KKKEPTPGEKKIESPT. At S201 the chain carries Phosphoserine. T203 carries the post-translational modification Phosphothreonine. A Phosphoserine modification is found at S206. Residues 216–240 form a C2H2-type 1 zinc finger; sequence FYCHLCKKHMWDANSFENHIKGRTH. The segment at 288–310 adopts a C2H2-type 2; atypical zinc-finger fold; that stretch reads DYCTMCDLNFHGHISTHRKSEGH. Residues 319–343 form a C2H2-type 3 zinc finger; that stretch reads PKCIECNKEFATRIDYDTHLLSAEH. Positions 350–359 are enriched in basic and acidic residues; sequence NNTKVGERKR. Positions 350-447 are disordered; that stretch reads NNTKVGERKR…EEEEVALPVD (98 aa). Residues 379–383 carry the Nuclear localization signal motif; it reads KRKKK. Residues 386–401 show a composition bias toward basic and acidic residues; the sequence is KKEGEAADGEAKKEGA. Residues 405–414 show a composition bias toward acidic residues; that stretch reads EGAEGDEAEG. Residues 415–431 show a composition bias toward basic and acidic residues; it reads EEAKEGEEAADETKEGD. A compositionally biased stretch (acidic residues) spans 432 to 447; sequence ELNESQEEEEVALPVD. The segment at 489 to 513 adopts a C2H2-type 4 zinc-finger fold; sequence YECSVCSKFFDTEVTAEIHSRTATH. The tract at residues 534–716 is disordered; sequence RAAAALEENE…QRARGRYNRY (183 aa). A compositionally biased stretch (basic and acidic residues) spans 541–551; it reads ENERKKRKVEE. Residues 544–548 carry the Nuclear localization signal motif; sequence RKKRK. Residues 560 to 638 show a composition bias toward acidic residues; the sequence is AAEETTEGAE…GQEGEQEPEP (79 aa). The span at 639 to 656 shows a compositional bias: pro residues; that stretch reads EPAPVQTPAPAEPAPPAK. Over residues 657–704 the composition is skewed to low complexity; the sequence is TPAKTPTKAAAPAAVASPAAAATSADASPSPAKKATPARAAAGAKATP. Residues S673, S684, and S686 each carry the phosphoserine modification. T692 carries the phosphothreonine modification. Residues 707-716 show a composition bias toward basic residues; the sequence is QRARGRYNRY.

Its subcellular location is the nucleus. It localises to the chromosome. Functionally, may play a role in the process of early and late gene activation, or possibly in RNA processing, for a defined set of developmentally regulated loci. This chain is Zinc finger protein on ecdysone puffs (Pep), found in Drosophila melanogaster (Fruit fly).